A 298-amino-acid polypeptide reads, in one-letter code: Tyrosine recombinase XerC (298 aa).

Residues M1–N85 enclose the Core-binding (CB) domain. The 180-residue stretch at R106–D285 folds into the Tyr recombinase domain. Active-site residues include R146, K170, H237, R240, and H263. Y272 serves as the catalytic O-(3'-phospho-DNA)-tyrosine intermediate.

It belongs to the 'phage' integrase family. XerC subfamily. Forms a cyclic heterotetrameric complex composed of two molecules of XerC and two molecules of XerD.

The protein resides in the cytoplasm. In terms of biological role, site-specific tyrosine recombinase, which acts by catalyzing the cutting and rejoining of the recombining DNA molecules. The XerC-XerD complex is essential to convert dimers of the bacterial chromosome into monomers to permit their segregation at cell division. It also contributes to the segregational stability of plasmids. This chain is Tyrosine recombinase XerC, found in Pseudomonas fluorescens (strain ATCC BAA-477 / NRRL B-23932 / Pf-5).